The sequence spans 1039 residues: 3',5'-cyclic-AMP phosphodiesterase 4 (1039 aa).

A signal peptide spans 1 to 29 (MFNNNNNDKINNTMMSNNPSGQIINLESI). Residues Asn-11, Asn-34, and Asn-37 are each glycosylated (N-linked (GlcNAc...) asparagine). Residues 30–201 (DCNSNLSNTT…KKKVNAESLR (172 aa)) are Extracellular-facing. 2 disordered regions span residues 40 to 63 (SIKD…NNIN) and 116 to 181 (IIPN…NNSI). Positions 45-63 (NNNNNNNNNNNNNINNNIN) are enriched in low complexity. 5 N-linked (GlcNAc...) asparagine glycosylation sites follow: Asn-119, Asn-124, Asn-131, Asn-167, and Asn-178. Residues 202–222 (GPIIFQNFILYTFFLIVIGTA) form a helical membrane-spanning segment. Residues 223 to 226 (EGTS) are Cytoplasmic-facing. A helical transmembrane segment spans residues 227–247 (WAPEIRVANFVPYCVMCVVLL). Residues 248-256 (EFNRLHKKP) are Extracellular-facing. Residues 257 to 277 (LLRIIFPLYTSNIPFAYMCIF) traverse the membrane as a helical segment. The Cytoplasmic segment spans residues 278–283 (SREARK). Residues 284 to 304 (YVLISLLFFASCLCIFLQSGI) traverse the membrane as a helical segment. Over 305 to 310 (PDLRKH) the chain is Extracellular. The chain crosses the membrane as a helical span at residues 311 to 331 (IVIFCIIFMINYGCCILFMDW). The Cytoplasmic segment spans residues 332-356 (FYIDTTGTKPYRGRILATKIHWGEE). The helical transmembrane segment at 357–377 (ATILVSMALLGCIFIVLEKFI) threads the bilayer. Residues 378-1039 (KSYARCVAEQ…LTQSNYLIVV (662 aa)) lie on the Extracellular side of the membrane. The stretch at 384–414 (VAEQHYQIQCLQKEKEKLQTEINISLKKLDL) forms a coiled coil. Residues Asn-406, Asn-430, Asn-500, and Asn-515 are each glycosylated (N-linked (GlcNAc...) asparagine). A PDEase domain is found at 533–973 (PEITDQGIQE…QQLQQQQQQQ (441 aa)). His-609 (proton donor) is an active-site residue. Residues His-613, His-648, and Asp-649 each coordinate a divalent metal cation. The interval 738–835 (FPTTTNTQQP…NNSNSNNQNQ (98 aa)) is disordered. The span at 740–835 (TTTNTQQPSS…NNSNSNNQNQ (96 aa)) shows a compositional bias: low complexity. Residues Asn-769, Asn-791, Asn-795, Asn-804, Asn-809, Asn-823, and Asn-826 are each glycosylated (N-linked (GlcNAc...) asparagine). Asp-861 is an a divalent metal cation binding site. Residues Asn-874, Asn-944, Asn-1018, and Asn-1023 are each glycosylated (N-linked (GlcNAc...) asparagine). Low complexity predominate over residues 978–1019 (QQQQQQLHHHQQQQQFQHQQHQQQLQHQHQQQLNNQNQNQNQ). The segment at 978 to 1033 (QQQQQQLHHHQQQQQFQHQQHQQQLQHQHQQQLNNQNQNQNQSNSNNSNSFGLTQS) is disordered. Polar residues predominate over residues 1020–1033 (SNSNNSNSFGLTQS).

It belongs to the cyclic nucleotide phosphodiesterase family. The cofactor is a divalent metal cation.

It localises to the cell membrane. The catalysed reaction is 3',5'-cyclic AMP + H2O = AMP + H(+). Its activity is regulated as follows. Inhibited by 3-isobutyl-1-methylxanthine (IBMX). Its function is as follows. Phosphodiesterase specific for extracellular cAMP. Involved in the degradation of extracellular cAMP specifically during multicellular development. The protein is 3',5'-cyclic-AMP phosphodiesterase 4 (Pde4) of Dictyostelium discoideum (Social amoeba).